The chain runs to 371 residues: UDP-N-acetylglucosamine--N-acetylmuramyl-(pentapeptide) pyrophosphoryl-undecaprenol N-acetylglucosamine transferase (371 aa).

UDP-N-acetyl-alpha-D-glucosamine contacts are provided by residues Thr-10–Gly-12, Asn-122, Arg-166, Ser-196, and Gln-301.

This sequence belongs to the glycosyltransferase 28 family. MurG subfamily.

The protein resides in the cell inner membrane. It catalyses the reaction di-trans,octa-cis-undecaprenyl diphospho-N-acetyl-alpha-D-muramoyl-L-alanyl-D-glutamyl-meso-2,6-diaminopimeloyl-D-alanyl-D-alanine + UDP-N-acetyl-alpha-D-glucosamine = di-trans,octa-cis-undecaprenyl diphospho-[N-acetyl-alpha-D-glucosaminyl-(1-&gt;4)]-N-acetyl-alpha-D-muramoyl-L-alanyl-D-glutamyl-meso-2,6-diaminopimeloyl-D-alanyl-D-alanine + UDP + H(+). The protein operates within cell wall biogenesis; peptidoglycan biosynthesis. Its function is as follows. Cell wall formation. Catalyzes the transfer of a GlcNAc subunit on undecaprenyl-pyrophosphoryl-MurNAc-pentapeptide (lipid intermediate I) to form undecaprenyl-pyrophosphoryl-MurNAc-(pentapeptide)GlcNAc (lipid intermediate II). This chain is UDP-N-acetylglucosamine--N-acetylmuramyl-(pentapeptide) pyrophosphoryl-undecaprenol N-acetylglucosamine transferase, found in Halothermothrix orenii (strain H 168 / OCM 544 / DSM 9562).